We begin with the raw amino-acid sequence, 453 residues long: Trigger factor (453 aa).

Residues 171 to 256 (GDRVTVSFKG…ATKVEAPQDV (86 aa)) enclose the PPIase FKBP-type domain.

Belongs to the FKBP-type PPIase family. Tig subfamily.

The protein resides in the cytoplasm. The catalysed reaction is [protein]-peptidylproline (omega=180) = [protein]-peptidylproline (omega=0). Its function is as follows. Involved in protein export. Acts as a chaperone by maintaining the newly synthesized protein in an open conformation. Functions as a peptidyl-prolyl cis-trans isomerase. The protein is Trigger factor of Rhodopseudomonas palustris (strain BisB5).